Here is a 285-residue protein sequence, read N- to C-terminus: Polyamine aminopropyltransferase (285 aa).

The 234-residue stretch at 5–238 (EMWYETLHTG…GIMTFAWASD (234 aa)) folds into the PABS domain. Glutamine 33 provides a ligand contact to S-methyl-5'-thioadenosine. Spermidine-binding residues include histidine 64 and aspartate 88. Residues glutamate 108 and 140–141 (DG) contribute to the S-methyl-5'-thioadenosine site. The active-site Proton acceptor is aspartate 158. 158–161 (DCTD) is a binding site for spermidine. Residue proline 165 coordinates S-methyl-5'-thioadenosine.

This sequence belongs to the spermidine/spermine synthase family. Homodimer or homotetramer.

The protein resides in the cytoplasm. It carries out the reaction S-adenosyl 3-(methylsulfanyl)propylamine + putrescine = S-methyl-5'-thioadenosine + spermidine + H(+). The protein operates within amine and polyamine biosynthesis; spermidine biosynthesis; spermidine from putrescine: step 1/1. Its function is as follows. Catalyzes the irreversible transfer of a propylamine group from the amino donor S-adenosylmethioninamine (decarboxy-AdoMet) to putrescine (1,4-diaminobutane) to yield spermidine. This is Polyamine aminopropyltransferase from Erwinia tasmaniensis (strain DSM 17950 / CFBP 7177 / CIP 109463 / NCPPB 4357 / Et1/99).